A 214-amino-acid chain; its full sequence is Phosphatidylserine decarboxylase proenzyme (214 aa).

Serine 182 acts as the Schiff-base intermediate with substrate; via pyruvic acid in catalysis. At serine 182 the chain carries Pyruvic acid (Ser); by autocatalysis.

The protein belongs to the phosphatidylserine decarboxylase family. PSD-A subfamily. Heterodimer of a large membrane-associated beta subunit and a small pyruvoyl-containing alpha subunit. It depends on pyruvate as a cofactor. Post-translationally, is synthesized initially as an inactive proenzyme. Formation of the active enzyme involves a self-maturation process in which the active site pyruvoyl group is generated from an internal serine residue via an autocatalytic post-translational modification. Two non-identical subunits are generated from the proenzyme in this reaction, and the pyruvate is formed at the N-terminus of the alpha chain, which is derived from the carboxyl end of the proenzyme. The post-translation cleavage follows an unusual pathway, termed non-hydrolytic serinolysis, in which the side chain hydroxyl group of the serine supplies its oxygen atom to form the C-terminus of the beta chain, while the remainder of the serine residue undergoes an oxidative deamination to produce ammonia and the pyruvoyl prosthetic group on the alpha chain.

It is found in the cell membrane. It carries out the reaction a 1,2-diacyl-sn-glycero-3-phospho-L-serine + H(+) = a 1,2-diacyl-sn-glycero-3-phosphoethanolamine + CO2. It participates in phospholipid metabolism; phosphatidylethanolamine biosynthesis; phosphatidylethanolamine from CDP-diacylglycerol: step 2/2. Functionally, catalyzes the formation of phosphatidylethanolamine (PtdEtn) from phosphatidylserine (PtdSer). The chain is Phosphatidylserine decarboxylase proenzyme from Burkholderia vietnamiensis (strain G4 / LMG 22486) (Burkholderia cepacia (strain R1808)).